Reading from the N-terminus, the 458-residue chain is Cobyrinate a,c-diamide synthase (458 aa).

The 192-residue stretch at 254 to 445 (KIGVIRDQVF…IHVHFLSDKS (192 aa)) folds into the GATase cobBQ-type domain. Residue cysteine 335 is the Nucleophile of the active site.

It belongs to the CobB/CbiA family. The cofactor is Mg(2+).

It carries out the reaction cob(II)yrinate + 2 L-glutamine + 2 ATP + 2 H2O = cob(II)yrinate a,c diamide + 2 L-glutamate + 2 ADP + 2 phosphate + 2 H(+). Its pathway is cofactor biosynthesis; adenosylcobalamin biosynthesis; cob(II)yrinate a,c-diamide from sirohydrochlorin (anaerobic route): step 10/10. Functionally, catalyzes the ATP-dependent amidation of the two carboxylate groups at positions a and c of cobyrinate, using either L-glutamine or ammonia as the nitrogen source. The sequence is that of Cobyrinate a,c-diamide synthase from Archaeoglobus fulgidus (strain ATCC 49558 / DSM 4304 / JCM 9628 / NBRC 100126 / VC-16).